A 616-amino-acid polypeptide reads, in one-letter code: Dihydroxy-acid dehydratase (616 aa).

Residue Asp81 participates in Mg(2+) binding. Cys122 is a binding site for [2Fe-2S] cluster. 2 residues coordinate Mg(2+): Asp123 and Lys124. The residue at position 124 (Lys124) is an N6-carboxylysine. Cys195 contacts [2Fe-2S] cluster. Glu491 contacts Mg(2+). The active-site Proton acceptor is the Ser517.

Belongs to the IlvD/Edd family. In terms of assembly, homodimer. The cofactor is [2Fe-2S] cluster. Mg(2+) serves as cofactor.

The catalysed reaction is (2R)-2,3-dihydroxy-3-methylbutanoate = 3-methyl-2-oxobutanoate + H2O. It catalyses the reaction (2R,3R)-2,3-dihydroxy-3-methylpentanoate = (S)-3-methyl-2-oxopentanoate + H2O. It functions in the pathway amino-acid biosynthesis; L-isoleucine biosynthesis; L-isoleucine from 2-oxobutanoate: step 3/4. The protein operates within amino-acid biosynthesis; L-valine biosynthesis; L-valine from pyruvate: step 3/4. Functionally, functions in the biosynthesis of branched-chain amino acids. Catalyzes the dehydration of (2R,3R)-2,3-dihydroxy-3-methylpentanoate (2,3-dihydroxy-3-methylvalerate) into 2-oxo-3-methylpentanoate (2-oxo-3-methylvalerate) and of (2R)-2,3-dihydroxy-3-methylbutanoate (2,3-dihydroxyisovalerate) into 2-oxo-3-methylbutanoate (2-oxoisovalerate), the penultimate precursor to L-isoleucine and L-valine, respectively. The protein is Dihydroxy-acid dehydratase of Blochmanniella pennsylvanica (strain BPEN).